The primary structure comprises 239 residues: Pyridoxine 5'-phosphate synthase (239 aa).

Residue asparagine 7 participates in 3-amino-2-oxopropyl phosphate binding. Residue 9-10 (DH) coordinates 1-deoxy-D-xylulose 5-phosphate. Arginine 18 is a 3-amino-2-oxopropyl phosphate binding site. Histidine 43 acts as the Proton acceptor in catalysis. 2 residues coordinate 1-deoxy-D-xylulose 5-phosphate: arginine 45 and histidine 50. Glutamate 70 (proton acceptor) is an active-site residue. A 1-deoxy-D-xylulose 5-phosphate-binding site is contributed by threonine 100. Histidine 191 functions as the Proton donor in the catalytic mechanism. Residues glycine 192 and 213-214 (GH) contribute to the 3-amino-2-oxopropyl phosphate site.

Belongs to the PNP synthase family. Homooctamer; tetramer of dimers.

The protein localises to the cytoplasm. It catalyses the reaction 3-amino-2-oxopropyl phosphate + 1-deoxy-D-xylulose 5-phosphate = pyridoxine 5'-phosphate + phosphate + 2 H2O + H(+). The protein operates within cofactor biosynthesis; pyridoxine 5'-phosphate biosynthesis; pyridoxine 5'-phosphate from D-erythrose 4-phosphate: step 5/5. In terms of biological role, catalyzes the complicated ring closure reaction between the two acyclic compounds 1-deoxy-D-xylulose-5-phosphate (DXP) and 3-amino-2-oxopropyl phosphate (1-amino-acetone-3-phosphate or AAP) to form pyridoxine 5'-phosphate (PNP) and inorganic phosphate. This Synechococcus sp. (strain JA-2-3B'a(2-13)) (Cyanobacteria bacterium Yellowstone B-Prime) protein is Pyridoxine 5'-phosphate synthase.